We begin with the raw amino-acid sequence, 238 residues long: tRNA (guanine-N(7)-)-methyltransferase (238 aa).

Positions 68, 93, 120, and 143 each coordinate S-adenosyl-L-methionine. Asp143 is an active-site residue. Residues Lys147, Asp179, and 216-219 (TKFE) each bind substrate.

This sequence belongs to the class I-like SAM-binding methyltransferase superfamily. TrmB family.

It carries out the reaction guanosine(46) in tRNA + S-adenosyl-L-methionine = N(7)-methylguanosine(46) in tRNA + S-adenosyl-L-homocysteine. It participates in tRNA modification; N(7)-methylguanine-tRNA biosynthesis. In terms of biological role, catalyzes the formation of N(7)-methylguanine at position 46 (m7G46) in tRNA. The protein is tRNA (guanine-N(7)-)-methyltransferase of Shewanella sp. (strain W3-18-1).